A 711-amino-acid chain; its full sequence is Ribosomal RNA large subunit methyltransferase K/L (711 aa).

In terms of domain architecture, THUMP spans 43-154; sequence TLYRTLLWSR…RENLVISLDL (112 aa).

This sequence belongs to the methyltransferase superfamily. RlmKL family.

It is found in the cytoplasm. It carries out the reaction guanosine(2445) in 23S rRNA + S-adenosyl-L-methionine = N(2)-methylguanosine(2445) in 23S rRNA + S-adenosyl-L-homocysteine + H(+). The enzyme catalyses guanosine(2069) in 23S rRNA + S-adenosyl-L-methionine = N(2)-methylguanosine(2069) in 23S rRNA + S-adenosyl-L-homocysteine + H(+). Specifically methylates the guanine in position 2445 (m2G2445) and the guanine in position 2069 (m7G2069) of 23S rRNA. The chain is Ribosomal RNA large subunit methyltransferase K/L from Haemophilus influenzae (strain PittGG).